The primary structure comprises 372 residues: Tubby-like F-box protein 9 (372 aa).

Residues 1 to 51 are disordered; it reads MALWRCSSSWLSSVSRSSGGVGGGESKVSPEIAPVSGGEGEGEEEEGEEER. A compositionally biased stretch (low complexity) spans 7–18; it reads SSSWLSSVSRSS. Positions 40–49 are enriched in acidic residues; sequence GEGEEEEGEE. The F-box domain maps to 50–105; it reads ERWSRLLPELLTEIMRRVDAGAERWPPRRDVVACACVCRRWRDAAVSVVRPPLECG.

The protein belongs to the TUB family. As to expression, ubiquitous.

In Oryza sativa subsp. japonica (Rice), this protein is Tubby-like F-box protein 9 (TULP9).